Reading from the N-terminus, the 641-residue chain is 1-deoxy-D-xylulose-5-phosphate synthase (641 aa).

Thiamine diphosphate is bound by residues His79 and 120–122 (AHS). Residue Asp151 coordinates Mg(2+). Residues 152 to 153 (GA), Asn180, Tyr290, and Glu372 contribute to the thiamine diphosphate site. Position 180 (Asn180) interacts with Mg(2+).

Belongs to the transketolase family. DXPS subfamily. As to quaternary structure, homodimer. Requires Mg(2+) as cofactor. It depends on thiamine diphosphate as a cofactor.

The enzyme catalyses D-glyceraldehyde 3-phosphate + pyruvate + H(+) = 1-deoxy-D-xylulose 5-phosphate + CO2. Its pathway is metabolic intermediate biosynthesis; 1-deoxy-D-xylulose 5-phosphate biosynthesis; 1-deoxy-D-xylulose 5-phosphate from D-glyceraldehyde 3-phosphate and pyruvate: step 1/1. Functionally, catalyzes the acyloin condensation reaction between C atoms 2 and 3 of pyruvate and glyceraldehyde 3-phosphate to yield 1-deoxy-D-xylulose-5-phosphate (DXP). The sequence is that of 1-deoxy-D-xylulose-5-phosphate synthase from Bradyrhizobium sp. (strain BTAi1 / ATCC BAA-1182).